The sequence spans 502 residues: ATP synthase subunit alpha (502 aa).

169 to 176 is a binding site for ATP; that stretch reads GDRQTGKT.

It belongs to the ATPase alpha/beta chains family. As to quaternary structure, F-type ATPases have 2 components, CF(1) - the catalytic core - and CF(0) - the membrane proton channel. CF(1) has five subunits: alpha(3), beta(3), gamma(1), delta(1), epsilon(1). CF(0) has three main subunits: a(1), b(2) and c(9-12). The alpha and beta chains form an alternating ring which encloses part of the gamma chain. CF(1) is attached to CF(0) by a central stalk formed by the gamma and epsilon chains, while a peripheral stalk is formed by the delta and b chains.

Its subcellular location is the cell membrane. It catalyses the reaction ATP + H2O + 4 H(+)(in) = ADP + phosphate + 5 H(+)(out). In terms of biological role, produces ATP from ADP in the presence of a proton gradient across the membrane. The alpha chain is a regulatory subunit. The chain is ATP synthase subunit alpha from Bacillus pumilus (strain SAFR-032).